The following is a 427-amino-acid chain: Hydroxylamine reductase (427 aa).

Positions 3, 6, 15, and 21 each coordinate [4Fe-4S] cluster. Hybrid [4Fe-2O-2S] cluster-binding residues include histidine 129, glutamate 153, cysteine 197, cysteine 283, cysteine 311, cysteine 336, glutamate 370, and lysine 372. The residue at position 283 (cysteine 283) is a Cysteine persulfide.

Belongs to the HCP family. [4Fe-4S] cluster serves as cofactor. Requires hybrid [4Fe-2O-2S] cluster as cofactor.

It is found in the cytoplasm. The catalysed reaction is A + NH4(+) + H2O = hydroxylamine + AH2 + H(+). Functionally, catalyzes the reduction of hydroxylamine to form NH(3) and H(2)O. This Methanothermobacter thermautotrophicus (strain ATCC 29096 / DSM 1053 / JCM 10044 / NBRC 100330 / Delta H) (Methanobacterium thermoautotrophicum) protein is Hydroxylamine reductase.